We begin with the raw amino-acid sequence, 511 residues long: Protein phosphatase 2C 16 (511 aa).

A signal peptide spans 1–22; the sequence is MEEMTPAVAMTLSLAANTMCES. The region spanning 189–501 is the PPM-type phosphatase domain; sequence LWGTVSIQGN…DNISIIVIDL (313 aa). Mn(2+)-binding residues include Asp243, Gly244, Asp432, and Asp492.

The protein belongs to the PP2C family. Interacts with SWI3B (via N-terminus). Interacts with ABA-bounded PYR1, PYL1, PYL2, PYL3, PYL4, PYL5, PYL6, PYL8 and PYL9, and with free PYL2, PYL3, PYL4, PYL10 and PYL13. Mg(2+) is required as a cofactor. It depends on Mn(2+) as a cofactor. In terms of tissue distribution, expressed in seeds, roots, stems, leaves and flowers, especially in meristematic tissues, guard cells, embryo and siliques.

Its subcellular location is the cytoplasm. It localises to the nucleus. The catalysed reaction is O-phospho-L-seryl-[protein] + H2O = L-seryl-[protein] + phosphate. It carries out the reaction O-phospho-L-threonyl-[protein] + H2O = L-threonyl-[protein] + phosphate. Its activity is regulated as follows. Repressed by PYR/PYL/RCAR ABA receptors in an ABA-dependent manner. Key component and repressor of the abscisic acid (ABA) signaling pathway that regulates numerous ABA responses, such as stomatal closure, seed germination and inhibition of vegetative growth. Confers enhanced sensitivity to drought. In Arabidopsis thaliana (Mouse-ear cress), this protein is Protein phosphatase 2C 16 (HAB1).